A 464-amino-acid chain; its full sequence is tRNA modification GTPase MnmE (464 aa).

(6S)-5-formyl-5,6,7,8-tetrahydrofolate-binding residues include arginine 27, glutamate 90, and lysine 129. The TrmE-type G domain maps to 222–384 (GVALVLAGSV…LYDKIRALIS (163 aa)). Residues 232-237 (NAGKSS), 251-257 (SSYPGTT), and 276-279 (DTAG) contribute to the GTP site. Positions 236 and 257 each coordinate Mg(2+). A (6S)-5-formyl-5,6,7,8-tetrahydrofolate-binding site is contributed by lysine 464.

Belongs to the TRAFAC class TrmE-Era-EngA-EngB-Septin-like GTPase superfamily. TrmE GTPase family. As to quaternary structure, homodimer. Heterotetramer of two MnmE and two MnmG subunits. The cofactor is K(+).

Its subcellular location is the cytoplasm. Functionally, exhibits a very high intrinsic GTPase hydrolysis rate. Involved in the addition of a carboxymethylaminomethyl (cmnm) group at the wobble position (U34) of certain tRNAs, forming tRNA-cmnm(5)s(2)U34. The polypeptide is tRNA modification GTPase MnmE (Borreliella burgdorferi (strain ATCC 35210 / DSM 4680 / CIP 102532 / B31) (Borrelia burgdorferi)).